The following is a 314-amino-acid chain: 4-hydroxy-3-methylbut-2-enyl diphosphate reductase (314 aa).

Cys-18 provides a ligand contact to [4Fe-4S] cluster. Positions 47 and 80 each coordinate (2E)-4-hydroxy-3-methylbut-2-enyl diphosphate. His-47 and His-80 together coordinate dimethylallyl diphosphate. Residues His-47 and His-80 each contribute to the isopentenyl diphosphate site. A [4Fe-4S] cluster-binding site is contributed by Cys-102. His-130 provides a ligand contact to (2E)-4-hydroxy-3-methylbut-2-enyl diphosphate. His-130 contacts dimethylallyl diphosphate. His-130 contacts isopentenyl diphosphate. Catalysis depends on Glu-132, which acts as the Proton donor. Residue Thr-171 coordinates (2E)-4-hydroxy-3-methylbut-2-enyl diphosphate. Cys-201 is a [4Fe-4S] cluster binding site. 4 residues coordinate (2E)-4-hydroxy-3-methylbut-2-enyl diphosphate: Ser-229, Ser-230, Asn-231, and Ser-273. Residues Ser-229, Ser-230, Asn-231, and Ser-273 each coordinate dimethylallyl diphosphate. The isopentenyl diphosphate site is built by Ser-229, Ser-230, Asn-231, and Ser-273.

The protein belongs to the IspH family. [4Fe-4S] cluster serves as cofactor.

The catalysed reaction is isopentenyl diphosphate + 2 oxidized [2Fe-2S]-[ferredoxin] + H2O = (2E)-4-hydroxy-3-methylbut-2-enyl diphosphate + 2 reduced [2Fe-2S]-[ferredoxin] + 2 H(+). The enzyme catalyses dimethylallyl diphosphate + 2 oxidized [2Fe-2S]-[ferredoxin] + H2O = (2E)-4-hydroxy-3-methylbut-2-enyl diphosphate + 2 reduced [2Fe-2S]-[ferredoxin] + 2 H(+). Its pathway is isoprenoid biosynthesis; dimethylallyl diphosphate biosynthesis; dimethylallyl diphosphate from (2E)-4-hydroxy-3-methylbutenyl diphosphate: step 1/1. The protein operates within isoprenoid biosynthesis; isopentenyl diphosphate biosynthesis via DXP pathway; isopentenyl diphosphate from 1-deoxy-D-xylulose 5-phosphate: step 6/6. Catalyzes the conversion of 1-hydroxy-2-methyl-2-(E)-butenyl 4-diphosphate (HMBPP) into a mixture of isopentenyl diphosphate (IPP) and dimethylallyl diphosphate (DMAPP). Acts in the terminal step of the DOXP/MEP pathway for isoprenoid precursor biosynthesis. This is 4-hydroxy-3-methylbut-2-enyl diphosphate reductase from Phenylobacterium zucineum (strain HLK1).